The chain runs to 175 residues: Lithostathine (175 aa).

An N-terminal signal peptide occupies residues 1–26 (MLPSLGLPRLSWMLLSCLMLLSQIQG). A propeptide spanning residues 27-37 (ENSQKELPSAR) is cleaved from the precursor. Residues 38-173 (ISCPSGSMAY…NLNLPYVCKF (136 aa)) form the C-type lectin domain. 3 disulfides stabilise this stretch: cysteine 40/cysteine 51, cysteine 68/cysteine 171, and cysteine 146/cysteine 163.

As to quaternary structure, cleaved to give an A chain and a B chain joined by a disulfide bond. In terms of tissue distribution, in pancreatic acinar cells.

It localises to the secreted. Its function is as follows. Might act as an inhibitor of spontaneous calcium carbonate precipitation. This chain is Lithostathine (PTP), found in Bos taurus (Bovine).